Consider the following 152-residue polypeptide: Cytochrome c-type biogenesis protein CcmE 2 (152 aa).

Residues 1-8 lie on the Cytoplasmic side of the membrane; the sequence is MNPQRRRR. A helical; Signal-anchor for type II membrane protein membrane pass occupies residues 9–29; it reads LWLVLALVLAGGLATTLVAMA. At 30–152 the chain is on the periplasmic side; the sequence is LQRNVAYLYT…HQVAPAKVTQ (123 aa). 2 residues coordinate heme: His123 and Tyr127.

This sequence belongs to the CcmE/CycJ family.

It is found in the cell inner membrane. In terms of biological role, heme chaperone required for the biogenesis of c-type cytochromes. Transiently binds heme delivered by CcmC and transfers the heme to apo-cytochromes in a process facilitated by CcmF and CcmH. The protein is Cytochrome c-type biogenesis protein CcmE 2 of Xanthomonas campestris pv. campestris (strain 8004).